A 341-amino-acid polypeptide reads, in one-letter code: S-adenosylmethionine:tRNA ribosyltransferase-isomerase (341 aa).

The protein belongs to the QueA family. As to quaternary structure, monomer.

Its subcellular location is the cytoplasm. It carries out the reaction 7-aminomethyl-7-carbaguanosine(34) in tRNA + S-adenosyl-L-methionine = epoxyqueuosine(34) in tRNA + adenine + L-methionine + 2 H(+). Its pathway is tRNA modification; tRNA-queuosine biosynthesis. Its function is as follows. Transfers and isomerizes the ribose moiety from AdoMet to the 7-aminomethyl group of 7-deazaguanine (preQ1-tRNA) to give epoxyqueuosine (oQ-tRNA). The sequence is that of S-adenosylmethionine:tRNA ribosyltransferase-isomerase from Halothermothrix orenii (strain H 168 / OCM 544 / DSM 9562).